Consider the following 255-residue polypeptide: Type III pantothenate kinase (255 aa).

6–13 (DVGNTNIV) contacts ATP. Substrate-binding positions include Tyr-100 and 107 to 110 (GADR). Residue Asp-109 is the Proton acceptor of the active site. Residue Asp-129 participates in K(+) binding. Residue Thr-132 coordinates ATP. Thr-184 is a binding site for substrate.

It belongs to the type III pantothenate kinase family. Homodimer. NH4(+) is required as a cofactor. It depends on K(+) as a cofactor.

The protein localises to the cytoplasm. The catalysed reaction is (R)-pantothenate + ATP = (R)-4'-phosphopantothenate + ADP + H(+). It functions in the pathway cofactor biosynthesis; coenzyme A biosynthesis; CoA from (R)-pantothenate: step 1/5. In terms of biological role, catalyzes the phosphorylation of pantothenate (Pan), the first step in CoA biosynthesis. This Geobacter sulfurreducens (strain ATCC 51573 / DSM 12127 / PCA) protein is Type III pantothenate kinase.